The following is an 81-amino-acid chain: Defensin-like protein 115 (81 aa).

Positions 1 to 24 (MAITKKMLVVFLLAFLFVTSSVHC) are cleaved as a signal peptide. Intrachain disulfides connect C40–C78, C46–C69, C54–C76, and C58–C77.

It belongs to the DEFL family.

The protein localises to the secreted. The chain is Defensin-like protein 115 from Arabidopsis thaliana (Mouse-ear cress).